A 443-amino-acid polypeptide reads, in one-letter code: Methyl-coenzyme M reductase I subunit beta (443 aa).

Position 367 (tyrosine 367) interacts with coenzyme M. A coenzyme B-binding site is contributed by glycine 369.

The protein belongs to the methyl-coenzyme M reductase beta subunit family. MCR is a hexamer of two alpha, two beta, and two gamma chains, forming a dimer of heterotrimers. Coenzyme F430 is required as a cofactor.

It is found in the cytoplasm. It catalyses the reaction coenzyme B + methyl-coenzyme M = methane + coenzyme M-coenzyme B heterodisulfide. The protein operates within one-carbon metabolism; methyl-coenzyme M reduction; methane from methyl-coenzyme M: step 1/1. Its function is as follows. Component of the methyl-coenzyme M reductase (MCR) I that catalyzes the reductive cleavage of methyl-coenzyme M (CoM-S-CH3 or 2-(methylthio)ethanesulfonate) using coenzyme B (CoB or 7-mercaptoheptanoylthreonine phosphate) as reductant which results in the production of methane and the mixed heterodisulfide of CoB and CoM (CoM-S-S-CoB). This is the final step in methanogenesis. This chain is Methyl-coenzyme M reductase I subunit beta (mcrB), found in Methanothermobacter thermautotrophicus (strain ATCC 29096 / DSM 1053 / JCM 10044 / NBRC 100330 / Delta H) (Methanobacterium thermoautotrophicum).